Reading from the N-terminus, the 299-residue chain is 11-beta-hydroxysteroid dehydrogenase-like 4A (299 aa).

A helical; Signal-anchor for type II membrane protein transmembrane segment spans residues 10 to 30; the sequence is ILLPIVTVSFLLVFMPFSIFF. NADP(+)-binding positions include 54–80 and D105; that span reads GSSSGIGEHLAYEYARRGAYLTLVARR. Residue S184 participates in substrate binding. Residue Y197 is the Proton acceptor of the active site. NADP(+) contacts are provided by residues 197–201 and K201; that span reads YAASK.

The protein belongs to the short-chain dehydrogenases/reductases (SDR) family.

The protein localises to the membrane. The polypeptide is 11-beta-hydroxysteroid dehydrogenase-like 4A (HSD4) (Arabidopsis thaliana (Mouse-ear cress)).